A 76-amino-acid chain; its full sequence is Theta defensin subunit B (76 aa).

An N-terminal signal peptide occupies residues 1-22 (MRTFALLTAMLLLVALQPQAEA). A propeptide spanning residues 23–64 (RQARADEAAAQQQPGADDQGMAHSFTRPENAALPLSESAKGL) is cleaved from the precursor. Residues 24 to 54 (QARADEAAAQQQPGADDQGMAHSFTRPENAA) are disordered. Over residues 30–44 (AAAQQQPGADDQGMA) the composition is skewed to low complexity. A Cyclopeptide (Arg-Cys) (interchain with C-73 in subunit A); in form BTD-1 cross-link involves residue Arg65. Arg65 participates in a covalent cross-link: Cyclopeptide (Arg-Cys) (interchain with C-73 in subunit B); in form BTD-2. Cysteines 68 and 73 form a disulfide. Cys73 participates in a covalent cross-link: Cyclopeptide (Cys-Arg) (interchain with R-65 in subunit A); in form BTD-1. A Cyclopeptide (Cys-Arg) (interchain with R-65 in subunit B); in form BTD-2 cross-link involves residue Cys73. Residues 74 to 76 (QLL) constitute a propeptide that is removed on maturation.

This sequence belongs to the alpha-defensin family. Theta subfamily. In terms of assembly, BTD-1 is a cyclic heterodimer composed of subunits A and B; disulfide-linked. BTD-2 is a cyclic homodimer composed of two subunits B; disulfide-linked. Forms a cyclic peptide with subunit A (BTD-1), or subunit B (BTD-2). An additional intersubunit disulfide bond is formed.

Its function is as follows. BTD-1 and BTD-2 have antimicrobial activity against the Gram-negative bacterium E.coli ML35, the Gram-positive bacterium S.aureus 502a, and the fungus C.albicans 16820. BTD-2 is more effective against E.coli than BTD-1. In Papio anubis (Olive baboon), this protein is Theta defensin subunit B (BTDB).